Consider the following 40-residue polypeptide: Chitin-binding protein 4 (40 aa).

N-glycosylated.

In terms of biological role, chitin-binding protein. Has antifungal activity against C.krusei, C.albicans, C.tropicalis and C.parapsilosis. Has antinociceptive and anti-inflammatory activity in mice. In Moringa oleifera (Horseradish tree), this protein is Chitin-binding protein 4.